Reading from the N-terminus, the 300-residue chain is Protein FANTASTIC FOUR 4 (300 aa).

Residues 30-56 (PQLSTPLKSHFQNSSIAPQDNPITINA) are compositionally biased toward polar residues. 3 disordered regions span residues 30-104 (PQLS…SPSS), 142-170 (TMETRTTSTTSNPSRQDRKRNTMASLPPP), and 227-264 (TETKEEKEEEEEETIETVRDNEEEIPEYKEEEEEKEEE). Low complexity-rich tracts occupy residues 58–88 (SLPSSSPNPSSNSDTNSGSWSFLESLSNSSS) and 142–151 (TMETRTTSTT). The 52-residue stretch at 166–217 (SLPPPLTSMIGFDCIEVKSHRENGRLVMMATRPPPRNRCLQDRSNGCVRLAI) folds into the FAF domain. Over residues 233–262 (KEEEEEETIETVRDNEEEIPEYKEEEEEKE) the composition is skewed to acidic residues.

The protein belongs to the fantastic four family. As to expression, expressed in the shoot apex and young siliques. Detected in provascular and vascular tissue, but not in the vegetative meristem. In inflorescences, restricted to the base of the flower and to the vasculature of the stem and the pedicels, but absent from young flowers. Detected in the center of the inflorescence meristem.

Its function is as follows. Regulates the size of the shoot meristem by modulating the CLV3-WUS feedback loop. Can repress WUS but is under negative control by CLV3. The sequence is that of Protein FANTASTIC FOUR 4 (FAF4) from Arabidopsis thaliana (Mouse-ear cress).